The chain runs to 1133 residues: uncharacterized protein (1133 aa).

Disordered regions lie at residues 33–83 (QFED…NSSS), 305–629 (PVSN…NSNS), 679–723 (GKLD…SVKR), and 736–817 (IESP…SEEV). Positions 39–83 (NNNNSNNNNNNNNSNNNNSNNNENINRKTGSTLLSSSTSQLNSSS) are enriched in low complexity. The segment at residues 40-308 (NNNSNNNNNN…GHPTCNPVSN (269 aa)) is a DNA-binding region (NDT80). Positions 305–316 (PVSNNPSTPGTP) are enriched in polar residues. The span at 317–384 (ISNFDSSNNN…NNNSSGNSSS (68 aa)) shows a compositional bias: low complexity. Over residues 401 to 417 (INSLSNHNSPHLTPIQY) the composition is skewed to polar residues. The span at 418–452 (NNNNNNSNNNSNNNNNNNNNNNNSNNNNNNSNNNN) shows a compositional bias: low complexity. Polar residues predominate over residues 453 to 470 (HQFQSNNRIFKGNLSNPF). 2 stretches are compositionally biased toward low complexity: residues 473–615 (NYSQ…GNNS) and 686–714 (NNSN…NNNN). Residues 736-747 (IESPQSYISSPT) show a composition bias toward polar residues. Residues 757–771 (QPQPQPQPQPQPQPQ) show a composition bias toward pro residues. Over residues 772–808 (PQSQSQSQSQSQSQSQSQSQSQSQPIQQIVQQQLSSP) the composition is skewed to low complexity. Residues 909–1020 (SDKRVKENVK…KKVDNVCMEL (112 aa)) form the Peptidase S74 domain. The chain crosses the membrane as a helical span at residues 1055–1075 (IFIGIGVFTLFVIFGLVAVSI). The tract at residues 1107–1133 (SGSNSCYDSSSNSAIDTTTSTGSGSIK) is disordered.

It localises to the membrane. This is an uncharacterized protein from Dictyostelium discoideum (Social amoeba).